The chain runs to 502 residues: Neuronal acetylcholine receptor subunit alpha-7 (502 aa).

Positions 1 to 22 are cleaved as a signal peptide; sequence MCGRRGGIWLALAAALLHVSLQ. Residues 23–233 lie on the Extracellular side of the membrane; the sequence is GEFQRRLYKE…VTMRRRTLYY (211 aa). Arg42 and Val44 together coordinate Ca(2+). N-linked (GlcNAc...) asparagine glycosylation is found at Asn46, Asn90, and Asn133. Cys150 and Cys164 are oxidised to a cystine. Residues Ser172 and Tyr210 each contribute to the Ca(2+) site. A disulfide bridge connects residues Cys212 and Cys213. 3 helical membrane-spanning segments follow: residues 234–254, 262–282, and 295–315; these read GLNLLIPCVLISALALLVFLL, ISLGITVLLSLTVFMLLVAEI, and QYFASTMIIVGLSVVVTVIVL. The segment at 260–267 is essential for TMEM35A/NACHO-mediated proper subunit assembly and trafficking to cell membrane; that stretch reads EKISLGIT. Residues 316–469 lie on the Cytoplasmic side of the membrane; the sequence is RYHHHDPDGG…WKFAACVVDR (154 aa). Residues 470 to 490 form a helical membrane-spanning segment; the sequence is LCLMAFSVFTIICTIGILMSA.

This sequence belongs to the ligand-gated ion channel (TC 1.A.9) family. Acetylcholine receptor (TC 1.A.9.1) subfamily. Alpha-7/CHRNA7 sub-subfamily. Homopentamer. Can also form heteropentamers with CHRNB2, mainly found in basal forebrain cholinergic neurons. Interacts with RIC3; which is required for proper folding and assembly. Interacts with LYPD6. Interacts with CANX. In terms of processing, glycosylations at Asn-46, Asn-90 and Asn-133 are essential for TMEM35A/NACHO-mediated proper subunit assembly and trafficking to the cell membrane. Higly expressed in brain. ALso expressed in immune cells sucha as macrophages.

It localises to the postsynaptic cell membrane. The protein localises to the cell membrane. The enzyme catalyses K(+)(in) = K(+)(out). It catalyses the reaction Na(+)(in) = Na(+)(out). The catalysed reaction is Ca(2+)(in) = Ca(2+)(out). It carries out the reaction choline(out) = choline(in). The enzyme catalyses NH4(+)(in) = NH4(+)(out). It catalyses the reaction L-arginine(in) = L-arginine(out). The catalysed reaction is guanidine(out) = guanidine(in). Its activity is regulated as follows. Activated by a myriad of ligands such as acetylcholine, cytisine, nicotine, choline and epibatidine. Oligomeric amyloid-beta protein 42 activates specifially CHRNA7:CHRNB2 nAchRs. Activity is modulated by positive allosteric modulators (PAMs), such as flavonoids, with a wide range of chemical diversity, pharmacological sensitivity and efficacy. AChR activity is inhibited by the antagonists alpha-conotoxons RgIA, ImI and ImII, small disulfide-constrained peptides from cone snails. Component of neuronal acetylcholine receptors (nAChRs) that function as pentameric, ligand-gated cation channels with high calcium permeability among other activities. nAChRs are excitatory neurotrasnmitter receptors formed by a collection of nAChR subunits known to mediate synaptic transmission in the nervous system and the neuromuscular junction. Each nAchR subunit confers differential attributes to channel properties, including activation, deactivation and desensitization kinetics, pH sensitivity, cation permeability, and binding to allosteric modulators. CHRNA7 forms homopentameric neuronal acetylcholine receptors abundantly expressed in the central nervous system, characterized by fast desensitization and high calcium permeability. Also forms heteropentamers with CHRNB2, mainly expressed in basal forebrain cholinergic neurons. Involved in the modulation of calcium-dependent signaling pathways and influences the release of neurotransmitters, including dopamine, glutamate and GABA. Involved in the modulation of calcium-dependent signaling pathways and influences the release of neurotransmitters, including dopamine, glutamate and GABA. Also expressed in non-neuronal cells such as immune cells like lymphocytes, monocytes and macrophages. In T cells, activation induces metabotropic signaling that results in an increase of intracellular Ca2+ concentrations, independent of ionotropic receptor functions. In macrophages, required for acetylcholine-mediated inhibition of TNF and other inflammatory cytokine release. Once activated by acetylcholine, nicotine or other agonists, selectively inhibits production of pro-inflammatory cytokines while leaving anti-inflammatory cytokines undisturbed. Stimulates the cholinergic anti-inflammatory pathway, controlling inflammation by inhibiting NFKB nuclear translocation and activating the JAK2-STAT3 pathway, independently of ion channel activity. Also expressed in the urothelium where it modulates reflex bladder activity by increasing intracellular calcium through internal stores and decreasing basal ATP release. The chain is Neuronal acetylcholine receptor subunit alpha-7 (Chrna7) from Mus musculus (Mouse).